Here is a 318-residue protein sequence, read N- to C-terminus: Homoserine kinase (318 aa).

Position 97 to 107 (97 to 107 (PIGSGLGSSAC)) interacts with ATP.

This sequence belongs to the GHMP kinase family. Homoserine kinase subfamily.

It is found in the cytoplasm. The enzyme catalyses L-homoserine + ATP = O-phospho-L-homoserine + ADP + H(+). Its pathway is amino-acid biosynthesis; L-threonine biosynthesis; L-threonine from L-aspartate: step 4/5. Catalyzes the ATP-dependent phosphorylation of L-homoserine to L-homoserine phosphate. In Vibrio cholerae serotype O1 (strain ATCC 39541 / Classical Ogawa 395 / O395), this protein is Homoserine kinase.